Here is a 484-residue protein sequence, read N- to C-terminus: Sodium/pantothenate symporter (484 aa).

Helical transmembrane passes span 3-23 (LGII…AIFA), 45-65 (GFVL…FVGG), 74-94 (LGWV…LGAL), 124-144 (VWLS…VQFI), 162-182 (LLLF…RAVV), 190-210 (TVMI…LGGV), 238-258 (FMAS…HTAV), 273-293 (MLIG…AGAL), 307-327 (VIPT…FLAA), 366-386 (VSYF…FAAL), 397-417 (LFAF…GIYW), 424-444 (GALS…QLGI), and 446-466 (LFNF…FLVG).

This sequence belongs to the sodium:solute symporter (SSF) (TC 2.A.21) family.

The protein localises to the cell inner membrane. The enzyme catalyses (R)-pantothenate(in) + Na(+)(in) = (R)-pantothenate(out) + Na(+)(out). Its function is as follows. Catalyzes the sodium-dependent uptake of extracellular pantothenate. This Haemophilus influenzae (strain ATCC 51907 / DSM 11121 / KW20 / Rd) protein is Sodium/pantothenate symporter (panF).